We begin with the raw amino-acid sequence, 707 residues long: MGCKISTEFCSDNPVGSISTSKVHPTDLSTPSYAIKPVEFYEEPLKDDQLFYKVALAKKEYREKEKDKKEQLSSNRRVSLQVEPNKLPIPLTRSSSLSSIMENRPPSGISNSSFIRSRNTASRRFTIDTSRAKSNQYVVSLCSKKIGIIEYPDGRSDKQPCDVYWHNVVLSDMNKIVTSPQSRVNKFPGMTELAKKISLTHSISSMQKLFPDEYAFYPNSWFLPAHLADFHAFYRKAQALGKTEMWFIVKPDEGAQGTGIYLINSPNQIRNVDQRQLVQEYVADPLLMNDKLKFDFRVYGVIKSINPLSIYVAREGMARFCTEKYEKPDSSNFKNLYAHLTNYSLNKANEAYVHSNTLQDQTRGSKRLLSTVFHQLESRGVKTKRLWHDIKLILVKTTLAMLPEIMLHYEHHFYDSTGPQCFQIMGFDVMIREDGTPILLEVNAAPSLTADHIVPHPGRTLLEGGQRVRSIVDEVIKIPLVRDTLLLVLGLMEEEYQNNSLKGETKSLDDMQTIKQRRKPHLSEIFPTRYGAHSGHLLFLDKAMYIYMQFVQLRSNVNITNAGLKQFVRKCNLIDIIPVVHVDAKVSEINYYFTGEKRTNGNGLPFHAFLMFLFFIAEKKFVLENDLLSKVQRLLSFCDMSLRRYGVRSARLRRAEVDSTIGNVEIYMLPSRMARNRSGTNGRKQNFTDDNNNPNSFAHLPKINERL.

The TTL domain maps to 124 to 488 (RFTIDTSRAK…PLVRDTLLLV (365 aa)). Residues 279–282 (QEYV), K293, and D295 each bind ATP. The tract at residues 675–707 (RNRSGTNGRKQNFTDDNNNPNSFAHLPKINERL) is disordered. Residues 677-696 (RSGTNGRKQNFTDDNNNPNS) show a composition bias toward polar residues.

This sequence belongs to the tubulin--tyrosine ligase family. Expressed in amphid sensory neurons. Weakly expressed in body wall muscles. Isoform a: Specifically expressed in ciliated sensory neurons in the head, including the IL1s, OLQ, head CEP, and amphid neurons. In the male tail, expressed in HOA, RnA, and phasmid neurons. Isoform b: Specifically expressed in male and hermaphrodite IL2 ciliated sensory neurons, and in male-specific CEM, HOB and RnB ciliated sensory neurons.

It localises to the cell projection. The protein localises to the axon. The protein resides in the perikaryon. Its subcellular location is the dendrite. It is found in the cilium. It localises to the extracellular vesicle. It catalyses the reaction L-glutamyl-[protein] + L-glutamate + ATP = gamma-L-glutamyl-L-glutamyl-[protein] + ADP + phosphate + H(+). In terms of biological role, polyglutamylase which preferentially modifies tubulin. Involved in the side-chain initiation step of the polyglutamylation reaction. By controlling tubulin glutamylation, regulates ciliary specialization and motor-based transport. Promotes the formation of A and B tubule singlets by splaying microtubule doublets in cilia. Together with ttll-4 and 5, required for male mating. Functionally, specifically promotes tubulin glutamylation in a subset of ciliated neurons including amphid, phasmid, CEP and RnA neurons. Its function is as follows. Specifically promotes tubulin glutamylation in male ciliated CEM, HOB and RnB neurons that release bioactive extracellular vesicles. Regulates the localization of TRP channel pdk-2 in male CEM, HOB and RnB neurons. Regulates the environmental release of bioactive extracellular vesicles in cilia. This is Tubulin polyglutamylase ttll-11 from Caenorhabditis elegans.